Here is a 280-residue protein sequence, read N- to C-terminus: Rhomboid-like protein 11, chloroplastic (280 aa).

The N-terminal 57 residues, 1–57 (MSQLLHLHRLSLPQSSLRFRFPPLHRRRAASSPTNSTQPPLQFRPLTVSRSQITCRF), are a transit peptide targeting the chloroplast. At 58 to 82 (SQSDITPQFELDKAKDNRKPQKRAN) the chain is on the stromal side. The helical transmembrane segment at 83 to 103 (GIFWIILINLGIYLADHFFQV) threads the bilayer. At 104 to 117 (RGIKSLYLYHNFPA) the chain is on the chloroplast intermembrane side. A helical transmembrane segment spans residues 118 to 140 (WYQFVTATFCHANWNHLSSNLFF). Over 141 to 154 (LYIFGKLVEEEEGN) the chain is Stromal. The chain crosses the membrane as a helical span at residues 155-175 (FGLWLSYLFTGVGANLVSWLV). Topologically, residues 176-178 (LPR) are chloroplast intermembrane. The helical transmembrane segment at 179–199 (NAVSVGASGAVFGLFAISVLV) threads the bilayer. S186 serves as the catalytic Nucleophile. The Stromal segment spans residues 200–243 (KMSWDWRKILEVLILGQFVIERVMEAAQASAGLSGTIYGGYSLQ). A helical membrane pass occupies residues 244–264 (TVNHIAHLSGALVGVVLVWLL). H250 functions as the Charge relay system in the catalytic mechanism. Residues 265 to 280 (SKFPSASMDQDVKKSS) lie on the Chloroplast intermembrane side of the membrane.

Belongs to the peptidase S54 family. In terms of assembly, homooligomer.

The protein resides in the plastid. The protein localises to the chloroplast inner membrane. Rhomboid-type serine protease that catalyzes intramembrane proteolysis. May be involved in TIC22 processing during its import. The polypeptide is Rhomboid-like protein 11, chloroplastic (Arabidopsis thaliana (Mouse-ear cress)).